A 422-amino-acid polypeptide reads, in one-letter code: Large ribosomal subunit protein uL4 (422 aa).

Position 2 is an N-acetylalanine (A2). An N6-acetyllysine modification is found at K14. The residue at position 97 (R97) is an Omega-N-methylarginine. K106 carries the post-translational modification N6-acetyllysine. A Glycyl lysine isopeptide (Lys-Gly) (interchain with G-Cter in SUMO2) cross-link involves residue K239. The residue at position 259 (K259) is an N6-acetyllysine. T266 bears the Phosphothreonine mark. Phosphoserine occurs at positions 290 and 295. Citrulline is present on R300. K327 participates in a covalent cross-link: Glycyl lysine isopeptide (Lys-Gly) (interchain with G-Cter in SUMO2). N6-acetyllysine is present on residues K333 and K353. The interval 359 to 422 (EAKSDQKGVQ…PTSEEKKAAA (64 aa)) is disordered. K361 bears the N6-acetyllysine; alternate mark. K361 participates in a covalent cross-link: Glycyl lysine isopeptide (Lys-Gly) (interchain with G-Cter in SUMO1); alternate. Phosphoserine is present on S362. Basic and acidic residues-rich tracts occupy residues 376–385 (NKEKKAVGDK) and 402–422 (PAAE…KAAA).

Belongs to the universal ribosomal protein uL4 family. In terms of assembly, component of the large ribosomal subunit. May bind IPO9 with low affinity. Interacts with RBM3. Citrullinated by PADI4.

It localises to the cytoplasm. Functionally, component of the large ribosomal subunit. The ribosome is a large ribonucleoprotein complex responsible for the synthesis of proteins in the cell. In Bos taurus (Bovine), this protein is Large ribosomal subunit protein uL4 (RPL4).